The following is a 310-amino-acid chain: Vomeronasal type-1 receptor 3 (310 aa).

Residues 1–5 (MASKD) are Extracellular-facing. Residues 6–26 (FAIGMILSQIMVGFLGNFFLL) form a helical membrane-spanning segment. The Cytoplasmic segment spans residues 27-50 (YHYSFLHFTRGMLQSTDLTLKHLT). A helical transmembrane segment spans residues 51–71 (IANSLVILSKGIPQTMAAFGL). At 72-91 (KDSLSDIGCKFVFYVHRVGR) the chain is on the extracellular side. Residues 92–112 (AVCTGNACLLSVFQVITISSS) traverse the membrane as a helical segment. Over 113 to 129 (EFRWAELKLHAHKYIRS) the chain is Cytoplasmic. A helical transmembrane segment spans residues 130–150 (FILVLCWILNTLVNITVPLHV). Over 151 to 186 (TGKWNSINSTKTNDYGYCSGGSRSRIPHSLHIVLLS) the chain is Extracellular. Asn-158 is a glycosylation site (N-linked (GlcNAc...) asparagine). Residues 187–207 (SLDVLCLGLMTLASGSMVFIL) form a helical membrane-spanning segment. Residues 208 to 235 (HRLKQQVQHIHGTNLSPRSSPESRVTQS) are Cytoplasmic-facing. A helical membrane pass occupies residues 236–258 (ILVLVSTLCYFTRSPPSLHMSLF). Over 259-263 (PNPSW) the chain is Extracellular. The chain crosses the membrane as a helical span at residues 264-284 (WPLNASALITACFPTVSPFVL). Topologically, residues 285–310 (MSRHPRIPRLGSACCGRNPQFPKLVR) are cytoplasmic.

Belongs to the G-protein coupled receptor 1 family.

The protein resides in the cell membrane. In terms of biological role, putative pheromone receptor. In Pan troglodytes (Chimpanzee), this protein is Vomeronasal type-1 receptor 3 (VN1R3).